Reading from the N-terminus, the 21-residue chain is Large ribosomal subunit protein uL10 (21 aa).

The protein belongs to the universal ribosomal protein uL10 family. In terms of assembly, part of the ribosomal stalk of the 50S ribosomal subunit. The N-terminus interacts with L11 and the large rRNA to form the base of the stalk. The C-terminus forms an elongated spine to which L12 dimers bind in a sequential fashion forming a multimeric L10(L12)X complex.

Forms part of the ribosomal stalk, playing a central role in the interaction of the ribosome with GTP-bound translation factors. This Bacillus cereus protein is Large ribosomal subunit protein uL10 (rplJ).